The following is a 102-amino-acid chain: Small ribosomal subunit protein uS10 (102 aa).

Belongs to the universal ribosomal protein uS10 family. Part of the 30S ribosomal subunit.

Functionally, involved in the binding of tRNA to the ribosomes. This Myxococcus xanthus (strain DK1622) protein is Small ribosomal subunit protein uS10.